A 201-amino-acid polypeptide reads, in one-letter code: Histidinol dehydrogenase (201 aa).

This sequence belongs to the histidinol dehydrogenase family. In terms of assembly, homodimer. Zn(2+) serves as cofactor.

The enzyme catalyses L-histidinol + 2 NAD(+) + H2O = L-histidine + 2 NADH + 3 H(+). It functions in the pathway amino-acid biosynthesis; L-histidine biosynthesis; L-histidine from 5-phospho-alpha-D-ribose 1-diphosphate: step 9/9. Functionally, catalyzes the sequential NAD-dependent oxidations of L-histidinol to L-histidinaldehyde and then to L-histidine. This is Histidinol dehydrogenase (hisD) from Buchnera aphidicola subsp. Diuraphis noxia.